The chain runs to 153 residues: Hemoglobin-3 (153 aa).

An N-acetylserine modification is found at Ser-2. The region spanning 4 to 150 is the Globin domain; it reads GLTGPQKAAL…ICRVQGDFMK (147 aa). A heme b-binding site is contributed by His-99.

Belongs to the globin family. In terms of assembly, homotetramer.

It is found in the cytoplasm. The chain is Hemoglobin-3 from Phacoides pectinatus (Thick lucine).